We begin with the raw amino-acid sequence, 1017 residues long: Probable calcium-transporting ATPase 8, plasma membrane-type (1017 aa).

Topologically, residues 1-153 are cytoplasmic; it reads MEKLDRYLQE…FVWDAFQDMT (153 aa). The next 2 helical transmembrane spans lie at 154 to 174 and 177 to 197; these read LIILMVCALLSVAVGLATEGW and GMYDGLGIILSIFLVVMVTAV. At 198-228 the chain is on the cytoplasmic side; the sequence is SDYKQSLQFKELDNEKKKIFIHVTRDGRRQK. The next 2 membrane-spanning stretches (helical) occupy residues 229–249 and 331–351; these read ISIYDLVVGDIVHLSIGDQVP and VATVIGKIGLVFAILTFLVLL. Over 352–384 the chain is Cytoplasmic; it reads VRFLIDKGMTVGLLKWYSTDALTIVNYFATAVT. Residues 385 to 405 traverse the membrane as a helical segment; that stretch reads IIVVAVPEGLPLAVTLSLAFA. D434 serves as the catalytic 4-aspartylphosphate intermediate. Mg(2+) is bound by residues D736 and D740. Residues 803–823 traverse the membrane as a helical segment; that stretch reads IVALVINFVSACITGSAPLTA. Residues 824 to 825 lie on the Cytoplasmic side of the membrane; sequence VQ. 2 helical membrane-spanning segments follow: residues 826-846 and 875-895; these read LLWVNMIMDTLGALALATEPP and SLYQLFVLGALMFGGESLLNI. At 896–938 the chain is on the cytoplasmic side; that stretch reads KGADSKSIINTLIFNSFVFCQVFNEINSREMQKINVFRGIISN. 2 helical membrane passes run 939–959 and 973–993; these read WIFIAVIAATVAFQVVIIEFL and WLLSVGLGSISLIVGVILKCI. The Cytoplasmic portion of the chain corresponds to 994–1017; sequence PVGSGETSATPNGYRPLANGPDDI.

Belongs to the cation transport ATPase (P-type) (TC 3.A.3) family. Type IIB subfamily.

The protein resides in the membrane. The catalysed reaction is Ca(2+)(in) + ATP + H2O = Ca(2+)(out) + ADP + phosphate + H(+). Activated by calmodulin. This magnesium-dependent enzyme catalyzes the hydrolysis of ATP coupled with the translocation of calcium from the cytosol out of the cell, into the endoplasmic reticulum, or into organelles. The protein is Probable calcium-transporting ATPase 8, plasma membrane-type of Oryza sativa subsp. japonica (Rice).